Consider the following 336-residue polypeptide: tRNA N6-adenosine threonylcarbamoyltransferase (336 aa).

Fe cation contacts are provided by H114 and H118. Residues 136–140 (LVSGG), D169, G182, D186, and N275 contribute to the substrate site. D301 lines the Fe cation pocket.

The protein belongs to the KAE1 / TsaD family. Fe(2+) is required as a cofactor.

The protein resides in the cytoplasm. The catalysed reaction is L-threonylcarbamoyladenylate + adenosine(37) in tRNA = N(6)-L-threonylcarbamoyladenosine(37) in tRNA + AMP + H(+). Functionally, required for the formation of a threonylcarbamoyl group on adenosine at position 37 (t(6)A37) in tRNAs that read codons beginning with adenine. Is involved in the transfer of the threonylcarbamoyl moiety of threonylcarbamoyl-AMP (TC-AMP) to the N6 group of A37, together with TsaE and TsaB. TsaD likely plays a direct catalytic role in this reaction. The polypeptide is tRNA N6-adenosine threonylcarbamoyltransferase (Streptococcus pneumoniae serotype 19F (strain G54)).